A 156-amino-acid chain; its full sequence is Transcription elongation factor GreA (156 aa).

The stretch at 46-66 forms a coiled coil; sequence AEYHSAREKQSFIEGRIKELE.

This sequence belongs to the GreA/GreB family.

In terms of biological role, necessary for efficient RNA polymerase transcription elongation past template-encoded arresting sites. The arresting sites in DNA have the property of trapping a certain fraction of elongating RNA polymerases that pass through, resulting in locked ternary complexes. Cleavage of the nascent transcript by cleavage factors such as GreA or GreB allows the resumption of elongation from the new 3'terminus. GreA releases sequences of 2 to 3 nucleotides. This chain is Transcription elongation factor GreA, found in Ruegeria pomeroyi (strain ATCC 700808 / DSM 15171 / DSS-3) (Silicibacter pomeroyi).